The sequence spans 335 residues: Fructose-1,6-bisphosphatase class 1 (335 aa).

Mg(2+)-binding residues include Glu94, Asp113, Leu115, and Asp116. Substrate-binding positions include 116 to 119 (DGSS), Asn208, and Lys274. Position 280 (Glu280) interacts with Mg(2+).

The protein belongs to the FBPase class 1 family. Homotetramer. Requires Mg(2+) as cofactor.

The protein localises to the cytoplasm. It catalyses the reaction beta-D-fructose 1,6-bisphosphate + H2O = beta-D-fructose 6-phosphate + phosphate. Its pathway is carbohydrate biosynthesis; gluconeogenesis. The protein is Fructose-1,6-bisphosphatase class 1 of Polynucleobacter asymbioticus (strain DSM 18221 / CIP 109841 / QLW-P1DMWA-1) (Polynucleobacter necessarius subsp. asymbioticus).